We begin with the raw amino-acid sequence, 166 residues long: Endoribonuclease YbeY (166 aa).

Residues H111, H115, and H121 each coordinate Zn(2+). Residues 141–166 (LGYPDPYAEDESADHPHSDTPSKDHE) form a disordered region. Basic and acidic residues predominate over residues 153-166 (ADHPHSDTPSKDHE).

Belongs to the endoribonuclease YbeY family. Zn(2+) is required as a cofactor.

The protein localises to the cytoplasm. In terms of biological role, single strand-specific metallo-endoribonuclease involved in late-stage 70S ribosome quality control and in maturation of the 3' terminus of the 16S rRNA. This chain is Endoribonuclease YbeY, found in Pseudomonas savastanoi pv. phaseolicola (strain 1448A / Race 6) (Pseudomonas syringae pv. phaseolicola (strain 1448A / Race 6)).